Consider the following 186-residue polypeptide: MTGEGSATILLGIDPGSRITGYGVVDVATPTPRYVASGCIRIKSDQLAQKLAQVYAGIGELIGLHRPHEIAIEQVFMSKNADSALKLGQARGTAIVCAANHGLEVFEYAPTQIKQAVTGTGAATKEQVQHMVTAILGLDGVPQADAADALAIALTHAYARQGRSLPPSRGRRRSGSRQRWRDYRPS.

Active-site residues include D14, E73, and D145. Residues D14, E73, and D145 each coordinate Mg(2+). The segment at 162–186 (GRSLPPSRGRRRSGSRQRWRDYRPS) is disordered. The span at 169–178 (RGRRRSGSRQ) shows a compositional bias: basic residues.

Belongs to the RuvC family. In terms of assembly, homodimer which binds Holliday junction (HJ) DNA. The HJ becomes 2-fold symmetrical on binding to RuvC with unstacked arms; it has a different conformation from HJ DNA in complex with RuvA. In the full resolvosome a probable DNA-RuvA(4)-RuvB(12)-RuvC(2) complex forms which resolves the HJ. The cofactor is Mg(2+).

The protein localises to the cytoplasm. It carries out the reaction Endonucleolytic cleavage at a junction such as a reciprocal single-stranded crossover between two homologous DNA duplexes (Holliday junction).. Functionally, the RuvA-RuvB-RuvC complex processes Holliday junction (HJ) DNA during genetic recombination and DNA repair. Endonuclease that resolves HJ intermediates. Cleaves cruciform DNA by making single-stranded nicks across the HJ at symmetrical positions within the homologous arms, yielding a 5'-phosphate and a 3'-hydroxyl group; requires a central core of homology in the junction. The consensus cleavage sequence is 5'-(A/T)TT(C/G)-3'. Cleavage occurs on the 3'-side of the TT dinucleotide at the point of strand exchange. HJ branch migration catalyzed by RuvA-RuvB allows RuvC to scan DNA until it finds its consensus sequence, where it cleaves and resolves the cruciform DNA. The polypeptide is Crossover junction endodeoxyribonuclease RuvC (Chromohalobacter salexigens (strain ATCC BAA-138 / DSM 3043 / CIP 106854 / NCIMB 13768 / 1H11)).